Reading from the N-terminus, the 258-residue chain is Spectinomycin 9-adenylyltransferase (258 aa).

The enzyme catalyses spectinomycin + ATP = 9-O-adenylylspectinomycin + diphosphate. Functionally, mediates bacterial resistance to spectinomycin, is probably a spectinomycin 9-adenylyltransferase. In Campylobacter jejuni, this protein is Spectinomycin 9-adenylyltransferase.